The sequence spans 627 residues: UvrABC system protein C (627 aa).

Residues 26-105 (PEPGVYFMRD…IKQHQPYFNV (80 aa)) enclose the GIY-YIG domain. The 36-residue stretch at 215 to 250 (QELIDILSEQMEKAAEALNFEVAARIRDQIAGLKSL) folds into the UVR domain.

This sequence belongs to the UvrC family. As to quaternary structure, interacts with UvrB in an incision complex.

Its subcellular location is the cytoplasm. In terms of biological role, the UvrABC repair system catalyzes the recognition and processing of DNA lesions. UvrC both incises the 5' and 3' sides of the lesion. The N-terminal half is responsible for the 3' incision and the C-terminal half is responsible for the 5' incision. The protein is UvrABC system protein C of Trichormus variabilis (strain ATCC 29413 / PCC 7937) (Anabaena variabilis).